Here is a 206-residue protein sequence, read N- to C-terminus: 2,3-bisphosphoglycerate-dependent phosphoglycerate mutase (206 aa).

Substrate-binding positions include 9–16, 22–23, R61, 88–91, K99, 115–116, and 159–160; these read RHGQSEWN, TG, ERDY, RR, and GN. H10 (tele-phosphohistidine intermediate) is an active-site residue. Residue E88 is the Proton donor/acceptor of the active site.

This sequence belongs to the phosphoglycerate mutase family. BPG-dependent PGAM subfamily. As to quaternary structure, homodimer.

The enzyme catalyses (2R)-2-phosphoglycerate = (2R)-3-phosphoglycerate. It functions in the pathway carbohydrate degradation; glycolysis; pyruvate from D-glyceraldehyde 3-phosphate: step 3/5. Catalyzes the interconversion of 2-phosphoglycerate and 3-phosphoglycerate. This chain is 2,3-bisphosphoglycerate-dependent phosphoglycerate mutase, found in Bartonella quintana (strain Toulouse) (Rochalimaea quintana).